The sequence spans 563 residues: Pre-hexon-linking protein IIIa (563 aa).

The interval 1–117 (MRKRRTLTAP…ALLHRVSKYN (117 aa)) is peripentonal hexon-tethering domain. Residues 148–261 (GSLTALNSFL…FTDSVSISRD (114 aa)) are binding to hexon-linking protein. The residue at position 235 (Ser-235) is a Phosphoserine; by host. Position 284 is a phosphothreonine; by host (Thr-284). The disordered stretch occupies residues 449-472 (RTESRSVSRVPTPASSRRSSVAMA). Phosphoserine; by host occurs at positions 452 and 456. A compositionally biased stretch (low complexity) spans 462–472 (ASSRRSSVAMA). 2 positions are modified to phosphoserine; by host: Ser-475 and Ser-486. The segment at 522–543 (KYSSAISSDESDDGMSKPDKFL) is disordered. The propeptide occupies 549–563 (GNPFAHLRPKLGRCL).

It belongs to the adenoviridae hexon-linking protein IIIa family. As to quaternary structure, interacts with hexon proteins; this interaction tethers the peripentonal hexons to hexons situated in the facet. Interacts with the penton protein (via N-terminus). Interacts with packaging protein 3; this interaction is required to promote correct genome packaging. In terms of processing, cleaved near the C-terminus by the viral protease during virion maturation to form the mature protein.

It localises to the virion. The protein localises to the host nucleus. Structural component of the virion that acts as a cement protein on the capsid exterior which mediates the interactions between the hexons, including the peripentonal hexons, and reaches all the way to the penton vertices. Two hexon linking proteins IIIa, one from each facet, stabilize the unique edge interface between a pair of facets. As the virus enters the host cell, hexon linking proteins IIIa are shed concomitant with virion acidification in the endosome. During virus assembly, seems to play a role in the serotype specificity of the packaging of viral DNA via its interaction with packaging protein 3. The polypeptide is Pre-hexon-linking protein IIIa (Canis lupus familiaris (Dog)).